The chain runs to 446 residues: Vacuolar cation/proton exchanger 4 (446 aa).

Positions 1 to 16 are enriched in low complexity; sequence MSSISTESSSNLSLLE. Positions 1–33 are disordered; sequence MSSISTESSSNLSLLENGGGGSDKPTAETSRRV. Over 1–69 the chain is Cytoplasmic; that stretch reads MSSISTESSS…MRRILTNLQE (69 aa). Residues 70–90 traverse the membrane as a helical segment; sequence VLLGTKLFILFPAVPLAVVAH. Over 91 to 96 the chain is Extracellular; sequence RYDCPR. The helical transmembrane segment at 97–117 threads the bilayer; the sequence is AWVFALSLLGLTPLAERISFL. Over 118 to 128 the chain is Cytoplasmic; that stretch reads TEQIAFHTGPT. Residues 129–149 form a helical membrane-spanning segment; sequence VGGLMNATCGNATEMIIAILA. The interval 138 to 173 is cation selection; sequence GNATEMIIAILAVGQRKMRIVKLSLLGSILSNLLFV. At 150-162 the chain is on the extracellular side; sequence VGQRKMRIVKLSL. Residues 163–183 traverse the membrane as a helical segment; the sequence is LGSILSNLLFVLGTSLFLGGI. At 184–196 the chain is on the cytoplasmic side; it reads SNLRKHQSFDPRQ. A helical transmembrane segment spans residues 197 to 217; the sequence is GDMNSMLLYLALLCQTLPMIM. The Extracellular portion of the chain corresponds to 218–238; that stretch reads RFTMEAEEYDGSDVVVLSRAS. A helical transmembrane segment spans residues 239–259; that stretch reads SFVMLIAYLAFLIFHLFSSHL. Over 260-285 the chain is Cytoplasmic; sequence SPPPPPLPQREDVHDDDVSDKEEEGA. Residues 286-306 traverse the membrane as a helical segment; sequence VIGMWSAIFWLIIMTLLVALL. Topologically, residues 307-319 are extracellular; it reads SDYLVSTIQDAAD. The helical transmembrane segment at 320-340 threads the bilayer; that stretch reads SWGLSVGFIGIILLPIVGNAA. Residues 337–372 form a cation selection region; that stretch reads GNAAEHAGAVIFAFRNKLDITLGIALGSATQIALFV. Topologically, residues 341-359 are cytoplasmic; it reads EHAGAVIFAFRNKLDITLG. A helical membrane pass occupies residues 360 to 380; it reads IALGSATQIALFVVPVTVLVA. Residues 381 to 388 are Extracellular-facing; sequence WTMGIEMD. Residues 389–409 form a helical membrane-spanning segment; it reads LNFNLLETACFALSILVTSLV. The Cytoplasmic portion of the chain corresponds to 410–416; the sequence is LQDGTSN. The chain crosses the membrane as a helical span at residues 417–437; the sequence is YMKGLVLLLCYVVIAACFFVS. At 438–446 the chain is on the extracellular side; that stretch reads NSPSSKLLF.

It belongs to the Ca(2+):cation antiporter (CaCA) (TC 2.A.19) family. Cation/proton exchanger (CAX) subfamily. In terms of tissue distribution, expressed at low levels in all tissues.

The protein localises to the vacuole membrane. Functionally, vacuolar cation/proton exchanger (CAX). Translocates Ca(2+) and other metal ions into vacuoles using the proton gradient formed by H(+)-ATPase and H(+)-pyrophosphatase. Cation selectivity transport in tobacco root tonoplast vesicles is Cd(2+)&gt;Zn(2+)&gt;&gt;Ca(2+)&gt;&gt;&gt;Mn(2+). The chain is Vacuolar cation/proton exchanger 4 (CAX4) from Arabidopsis thaliana (Mouse-ear cress).